A 61-amino-acid chain; its full sequence is Protein translocase subunit SecE (61 aa).

Residues 39 to 59 traverse the membrane as a helical segment; the sequence is LGIILIGLIGMLIRIMGILVL.

The protein belongs to the SecE/SEC61-gamma family. In terms of assembly, component of the Sec protein translocase complex. Heterotrimer consisting of SecY (alpha), SecG (beta) and SecE (gamma) subunits. The heterotrimers can form oligomers, although 1 heterotrimer is thought to be able to translocate proteins. Interacts with the ribosome. May interact with SecDF, and other proteins may be involved.

The protein resides in the cell membrane. Essential subunit of the Sec protein translocation channel SecYEG. Clamps together the 2 halves of SecY. May contact the channel plug during translocation. This is Protein translocase subunit SecE from Pyrococcus abyssi (strain GE5 / Orsay).